The following is a 685-amino-acid chain: N(6)-adenosine-methyltransferase MT-A70-like (685 aa).

Residues 464–465 (DI) and Asp482 each bind S-adenosyl-L-methionine. The segment at 552-565 (RIIRTGRTGHWLNH) is positively charged region required for RNA-binding. S-adenosyl-L-methionine contacts are provided by residues Lys599, 622–625 (RMHN), and 635–636 (NQ). A disordered region spans residues 657–685 (EIDVQPPSPPRASAMETDNEPMAIDSITA). Ser664 is subject to Phosphoserine.

The protein belongs to the MT-A70-like family. Interacts with FIP37. Interacts with MTB. Associates with MTB, FIP37, VIR and HAKAI to form the m6A writer complex which is essential for adenosine methylation at specific mRNA sequences.

It is found in the nucleus. It catalyses the reaction an adenosine in mRNA + S-adenosyl-L-methionine = an N(6)-methyladenosine in mRNA + S-adenosyl-L-homocysteine + H(+). Functionally, catalytic subunit of the N6-methyltransferase complex, a multiprotein complex that mediates N6-methyladenosine (m6A) methylation at the 5'-[AG]GAC-3' consensus sites of some mRNAs. Associates with MTB, FIP37, VIR and HAKAI to form the m6A writer complex which is essential for adenosine methylation at specific mRNA sequences. N6-methyladenosine (m6A) plays a role in mRNA stability, processing, translation efficiency and editing. The sequence is that of N(6)-adenosine-methyltransferase MT-A70-like from Arabidopsis thaliana (Mouse-ear cress).